The primary structure comprises 161 residues: MRHQHGLFMLALLAFLFVITVLGTDSGKKEKQEKKVKKSDCGEWQWSVCVPTSGDCGLGTREGTRSGKECKQTIKTQKCKIPCNWKKQFGAECKYQFQEWGDCDPDTGLKTRSGSLKRALHNAECQKTVTLSKPCGKVTKPKLQESKKKKKEGKNKEKLLD.

A signal peptide spans 1–23; that stretch reads MRHQHGLFMLALLAFLFVITVLG. 5 disulfides stabilise this stretch: C41-C70, C49-C79, C56-C83, C93-C125, and C103-C135. Chondroitin sulfate binding regions lie at residues 86–93 and 117–125; these read KKQFGAEC and KRALHNAEC. The interval 136–161 is disordered; the sequence is GKVTKPKLQESKKKKKEGKNKEKLLD. Positions 141 to 161 are chondroitin sulfate A binding; it reads PKLQESKKKKKEGKNKEKLLD.

The protein belongs to the pleiotrophin family. In terms of tissue distribution, expressed in high levels in brain and eye. Lower levels in bone. In the tailbud embryo stage, it is expressed exclusively in the central nervous system, especially in the hind region of the brain.

It is found in the secreted. Functionally, secreted growth factor that mediates its signal through cell-surface proteoglycan and non-proteoglycan receptors. Binds cell-surface proteoglycan receptor via their chondroitin sulfate (CS) groups. Thereby regulates many processes like cell proliferation, cell survival, cell growth, cell differentiation and cell migration. Has antibacterial activity against both Gram-positive and Gram-negative bacteria. This chain is Pleiotrophin-A (ptn-a), found in Xenopus laevis (African clawed frog).